The primary structure comprises 333 residues: Ketol-acid reductoisomerase (NADP(+)) (333 aa).

The 181-residue stretch at 1–181 folds into the KARI N-terminal Rossmann domain; it reads MKVYYDQDAD…GGARSGVIET (181 aa). Residues 24 to 27, R47, and 82 to 85 each bind NADP(+); these read YGSQ and DEVQ. Residue H107 is part of the active site. G133 contacts NADP(+). The KARI C-terminal knotted domain occupies 182 to 327; that stretch reads TFREETETDL…KELRSMMPWL (146 aa). Residues D190, E194, E226, and E230 each contribute to the Mg(2+) site. Position 251 (S251) interacts with substrate.

It belongs to the ketol-acid reductoisomerase family. Requires Mg(2+) as cofactor.

It carries out the reaction (2R)-2,3-dihydroxy-3-methylbutanoate + NADP(+) = (2S)-2-acetolactate + NADPH + H(+). The catalysed reaction is (2R,3R)-2,3-dihydroxy-3-methylpentanoate + NADP(+) = (S)-2-ethyl-2-hydroxy-3-oxobutanoate + NADPH + H(+). The protein operates within amino-acid biosynthesis; L-isoleucine biosynthesis; L-isoleucine from 2-oxobutanoate: step 2/4. It participates in amino-acid biosynthesis; L-valine biosynthesis; L-valine from pyruvate: step 2/4. Functionally, involved in the biosynthesis of branched-chain amino acids (BCAA). Catalyzes an alkyl-migration followed by a ketol-acid reduction of (S)-2-acetolactate (S2AL) to yield (R)-2,3-dihydroxy-isovalerate. In the isomerase reaction, S2AL is rearranged via a Mg-dependent methyl migration to produce 3-hydroxy-3-methyl-2-ketobutyrate (HMKB). In the reductase reaction, this 2-ketoacid undergoes a metal-dependent reduction by NADPH to yield (R)-2,3-dihydroxy-isovalerate. The chain is Ketol-acid reductoisomerase (NADP(+)) from Desulfovibrio desulfuricans (strain ATCC 27774 / DSM 6949 / MB).